The chain runs to 543 residues: MIAGQPIFILKEGTKRESGKDAMKENIEAAIAISNSVRSSLGPRGMDKMLVDSLGDIVITNDGVTILKEMDVEHPAAKMMVEVSKTQDSFVGDGTTTAVIIAGGLLQQAQGLINQNVHPTVISEGYRMASEEAKRVIDEISTKIGADEKALLLKMAQTSLNSKSASVAKDKLAEISYEAVKSVAELRDGKYYVDFDNIQVVKKQGGAIDDTQLINGIIVDKEKVHPGMPDVVKDAKIALLDAPLEIKKPEFDTNLRIEDPSMIQKFLAQEENMLREMVDKIKSVGANVVITQKGIDDMAQHYLSRAGIYAVRRVKKSDMDKLAKATGASIVSTIDEISSSDLGTAERVEQVKVGEDYMTFVTGCKNPKAVSILVRGETEHVVDEMERSITDSLHVVASALEDGAYAAGGGATAAEIAFRLRSYAQKIGGRQQLAIEKFADAIEEIPRALAENAGLDPIDILLKLRAEHAKGNKTYGINVFTGEIEDMVKNGVIEPIRVGKQAIESATEAAIMILRIDDVIATKSSSSSSNPPKSGSSSESSED.

The tract at residues 522-543 (TKSSSSSSNPPKSGSSSESSED) is disordered. Low complexity predominate over residues 523–543 (KSSSSSSNPPKSGSSSESSED).

It belongs to the TCP-1 chaperonin family. As to quaternary structure, forms a Heterooligomeric complex of two stacked eight-membered rings. Post-translationally, the N-terminus is blocked.

Its function is as follows. Molecular chaperone; binds unfolded polypeptides in vitro, and has a weak ATPase activity. The chain is Thermosome subunit beta (thsB) from Thermoplasma acidophilum (strain ATCC 25905 / DSM 1728 / JCM 9062 / NBRC 15155 / AMRC-C165).